The following is a 195-amino-acid chain: Ribosomal RNA small subunit methyltransferase G (195 aa).

S-adenosyl-L-methionine contacts are provided by residues glycine 60, leucine 65, 114–115 (IE), and arginine 128.

Belongs to the methyltransferase superfamily. RNA methyltransferase RsmG family.

It is found in the cytoplasm. The catalysed reaction is guanosine(527) in 16S rRNA + S-adenosyl-L-methionine = N(7)-methylguanosine(527) in 16S rRNA + S-adenosyl-L-homocysteine. In terms of biological role, specifically methylates the N7 position of guanine in position 527 of 16S rRNA. The protein is Ribosomal RNA small subunit methyltransferase G of Dinoroseobacter shibae (strain DSM 16493 / NCIMB 14021 / DFL 12).